The following is a 194-amino-acid chain: uncharacterized protein (194 aa).

Residues 6–66 (EFDTALVLHR…SAVKSYLEGK (61 aa)) form the HTH tetR-type domain. A DNA-binding region (H-T-H motif) is located at residues 29–48 (SLQDLLSHLGIARQSLYDTY).

This is an uncharacterized protein from Bacillus subtilis (strain 168).